Here is an 81-residue protein sequence, read N- to C-terminus: Small ribosomal subunit protein bS16 (81 aa).

It belongs to the bacterial ribosomal protein bS16 family.

This chain is Small ribosomal subunit protein bS16, found in Clostridium botulinum (strain Eklund 17B / Type B).